The primary structure comprises 103 residues: Small ribosomal subunit protein bS18c (103 aa).

This sequence belongs to the bacterial ribosomal protein bS18 family. In terms of assembly, part of the 30S ribosomal subunit.

It localises to the plastid. Its subcellular location is the chloroplast. The protein is Small ribosomal subunit protein bS18c of Buxus microphylla (Littleleaf boxwood).